A 278-amino-acid polypeptide reads, in one-letter code: Transmembrane protein 41B (278 aa).

Residues 1–31 form a disordered region; that stretch reads MQVHERSHTGGHTCQCNHGSEKKAPATGKVH. 6 consecutive transmembrane segments (helical) span residues 39–59, 96–116, 132–154, 184–204, 212–232, and 249–269; these read MSLL…FLVY, FYVE…TFAI, FPLA…YLLS, LINY…FINI, PLKV…FVAI, and SWNS…PAIF. Positions 127–238 are VTT domain; required for its function in autophagy; the sequence is GFLYPFPLAL…FVAIKAGTTL (112 aa).

Belongs to the TMEM41 family.

Its subcellular location is the endoplasmic reticulum membrane. It localises to the endomembrane system. The catalysed reaction is a 1,2-diacyl-sn-glycero-3-phospho-L-serine(in) = a 1,2-diacyl-sn-glycero-3-phospho-L-serine(out). The enzyme catalyses cholesterol(in) = cholesterol(out). It carries out the reaction a 1,2-diacyl-sn-glycero-3-phosphocholine(in) = a 1,2-diacyl-sn-glycero-3-phosphocholine(out). It catalyses the reaction a 1,2-diacyl-sn-glycero-3-phosphoethanolamine(in) = a 1,2-diacyl-sn-glycero-3-phosphoethanolamine(out). In terms of biological role, phospholipid scramblase involved in lipid homeostasis and membrane dynamics processes. Has phospholipid scramblase activity toward cholesterol and phosphatidylserine, as well as phosphatidylethanolamine and phosphatidylcholine. Required for autophagosome formation: participates in early stages of autophagosome biogenesis at the endoplasmic reticulum (ER) membrane by reequilibrating the leaflets of the ER as lipids are extracted by atg2 (atg2a or atg2b) to mediate autophagosome assembly. In addition to autophagy, involved in other processes in which phospholipid scramblase activity is required. Required for normal motor neuron development. The polypeptide is Transmembrane protein 41B (Xenopus tropicalis (Western clawed frog)).